The sequence spans 601 residues: Elongation factor 4 (601 aa).

The region spanning 6–188 (SHIRNFSIIA…QIVHRVPPPE (183 aa)) is the tr-type G domain. Residues 18–23 (DHGKST) and 135–138 (NKID) each bind GTP.

The protein belongs to the TRAFAC class translation factor GTPase superfamily. Classic translation factor GTPase family. LepA subfamily.

It is found in the cell inner membrane. The catalysed reaction is GTP + H2O = GDP + phosphate + H(+). Functionally, required for accurate and efficient protein synthesis under certain stress conditions. May act as a fidelity factor of the translation reaction, by catalyzing a one-codon backward translocation of tRNAs on improperly translocated ribosomes. Back-translocation proceeds from a post-translocation (POST) complex to a pre-translocation (PRE) complex, thus giving elongation factor G a second chance to translocate the tRNAs correctly. Binds to ribosomes in a GTP-dependent manner. This chain is Elongation factor 4, found in Anaeromyxobacter dehalogenans (strain 2CP-C).